The sequence spans 695 residues: Transketolase (695 aa).

His-37 contacts substrate. Residues His-77 and 126-128 contribute to the thiamine diphosphate site; that span reads GPL. Asp-164 serves as a coordination point for Mg(2+). Thiamine diphosphate is bound by residues Gly-165 and Asn-194. Residues Asn-194 and Ile-196 each coordinate Mg(2+). His-268, Arg-361, and Ser-388 together coordinate substrate. His-268 contacts thiamine diphosphate. Glu-415 functions as the Proton donor in the catalytic mechanism. Phe-441 serves as a coordination point for thiamine diphosphate. 3 residues coordinate substrate: His-465, Asp-473, and Arg-524.

Belongs to the transketolase family. In terms of assembly, homodimer. The cofactor is Mg(2+). Requires Ca(2+) as cofactor. Mn(2+) is required as a cofactor. Co(2+) serves as cofactor. It depends on thiamine diphosphate as a cofactor.

The enzyme catalyses D-sedoheptulose 7-phosphate + D-glyceraldehyde 3-phosphate = aldehydo-D-ribose 5-phosphate + D-xylulose 5-phosphate. The protein operates within carbohydrate biosynthesis; Calvin cycle. Functionally, catalyzes the transfer of a two-carbon ketol group from a ketose donor to an aldose acceptor, via a covalent intermediate with the cofactor thiamine pyrophosphate. The chain is Transketolase (cbbT) from Sinorhizobium medicae (strain WSM419) (Ensifer medicae).